The primary structure comprises 621 residues: MALLQISEPGMSPAPHQRRLAVGIDLGTTNSLVAAVRSSIPEVLGDERGRALLPSVVRYLPDRTAHIGYRAQEEAVRDPKNTIVSVKRFMGRGLRDVANIEHSPYDFVDAPGMLQIKTAAGVKSPVEISAEILATLRQRAEDTLGDDLVGAVITVPAYFDEAQRQATKDAARLAGLEVLRLLNEPTAAAIAYGLDNASEGIYAVYDLGGGTFDISVLKLTQGVFEVLATGGDSALGGDDFDQRLLCWIVEQASLQPLSAQDMRLLMVRARAAKEALSESDSTVIDAVLESGEIVHLTLTVEIFDQVTAHLVQKTLAPVRKALRDAGVAPDEVKGVVLVGGATRMPSIRKAVGDYFGQTPLTNLDPDRVVALGAAMQANLLAGNHAPGEDWLLLDVIPLSLGVETMGGLVEKIIPRNSTIPVARAQEFTTFKDGQTAMAIHVLQGERELASDCRSLARFELRGIPPMVAGAARIRVTYQVDADGLLSVTARETHSGVEASVTVKPSYGLADDDIARMLQESFREAEHDMKSRALAEERVEADRLVEATQRALETDGDLLSAEERTAVEALMATVREIATGEDHHAIHAAVEKLSHGTDEFAARRMDRSIKSALAGRKVQELG.

It belongs to the heat shock protein 70 family.

In terms of biological role, chaperone involved in the maturation of iron-sulfur cluster-containing proteins. Has a low intrinsic ATPase activity which is markedly stimulated by HscB. The protein is Chaperone protein HscA homolog of Cupriavidus necator (strain ATCC 17699 / DSM 428 / KCTC 22496 / NCIMB 10442 / H16 / Stanier 337) (Ralstonia eutropha).